A 399-amino-acid polypeptide reads, in one-letter code: Acetate kinase (399 aa).

Residue Asn7 coordinates Mg(2+). Lys14 lines the ATP pocket. A substrate-binding site is contributed by Arg91. Catalysis depends on Asp148, which acts as the Proton donor/acceptor. Residues 208 to 212, 283 to 285, and 331 to 335 each bind ATP; these read HLGNG, DFR, and GLGEN. A Mg(2+)-binding site is contributed by Glu384.

It belongs to the acetokinase family. As to quaternary structure, homodimer. The cofactor is Mg(2+). Requires Mn(2+) as cofactor.

It is found in the cytoplasm. The enzyme catalyses acetate + ATP = acetyl phosphate + ADP. The protein operates within metabolic intermediate biosynthesis; acetyl-CoA biosynthesis; acetyl-CoA from acetate: step 1/2. Functionally, catalyzes the formation of acetyl phosphate from acetate and ATP. Can also catalyze the reverse reaction. The sequence is that of Acetate kinase from Desulfitobacterium hafniense (strain DSM 10664 / DCB-2).